We begin with the raw amino-acid sequence, 160 residues long: uncharacterized protein (160 aa).

This is an uncharacterized protein from Mycobacterium tuberculosis (strain ATCC 25618 / H37Rv).